Reading from the N-terminus, the 150-residue chain is Troponin C, isoform 2A (150 aa).

Position 1 is an N-acetylmethionine (M1). EF-hand domains are found at residues 7-42 (EQIG…MGVK), 43-78 (ISEK…FLIE), 83-118 (ALKT…LDNR), and 119-150 (LTEE…MMNG). Ca(2+) contacts are provided by D56, D58, S60, E62, and E67. Residues D132, D134, S136, T138, and E143 each coordinate Ca(2+).

The protein belongs to the troponin C family.

Troponin is the central regulatory protein of striated muscle contraction. Tn consists of three components: Tn-I which is the inhibitor of actomyosin ATPase, Tn-T which contains the binding site for tropomyosin and Tn-C. The binding of calcium to Tn-C abolishes the inhibitory action of Tn on actin filaments. The polypeptide is Troponin C, isoform 2A (Homarus americanus (American lobster)).